A 249-amino-acid chain; its full sequence is Precorrin-4 C(11)-methyltransferase (249 aa).

It belongs to the precorrin methyltransferase family.

It carries out the reaction precorrin-4 + S-adenosyl-L-methionine = precorrin-5 + S-adenosyl-L-homocysteine. Its pathway is cofactor biosynthesis; adenosylcobalamin biosynthesis; cob(II)yrinate a,c-diamide from precorrin-2 (aerobic route): step 4/10. Its function is as follows. Catalyzes the methylation of C-11 in precorrin-4 to form precorrin-5. This Rhodococcus erythropolis (Arthrobacter picolinophilus) protein is Precorrin-4 C(11)-methyltransferase (cobM).